The chain runs to 381 residues: Diguanylate cyclase DosC (381 aa).

Residue H98 coordinates heme. The region spanning 325–381 (TPLSVLIIDVDKFKEINDTWGHNTGDEILRKVSFLSQKRLVKSKILGAGSSRKLAVS) is the GGDEF domain. D333 serves as a coordination point for Mg(2+). N341 and D350 together coordinate substrate.

It depends on heme as a cofactor. Requires Mg(2+) as cofactor.

The catalysed reaction is 2 GTP = 3',3'-c-di-GMP + 2 diphosphate. It participates in purine metabolism; 3',5'-cyclic di-GMP biosynthesis. Functionally, globin-coupled heme-based oxygen sensor protein displaying diguanylate cyclase (DGC) activity in response to oxygen availability. Thus, catalyzes the synthesis of cyclic diguanylate (c-di-GMP) via the condensation of 2 GTP molecules. Cyclic-di-GMP is a second messenger which controls cell surface-associated traits in bacteria. The chain is Diguanylate cyclase DosC (dosC) from Shigella flexneri serotype 5b (strain 8401).